The primary structure comprises 391 residues: Carbamoyl phosphate synthase small chain (391 aa).

The interval 1-199 is CPSase; the sequence is MVRISGFCCA…TWEFIEGPTT (199 aa). 3 residues coordinate L-glutamine: Ser-61, Gly-251, and Gly-253. The 186-residue stretch at 203-388 folds into the Glutamine amidotransferase type-1 domain; the sequence is TVVAIDFGVK…VALMRDRQPT (186 aa). Cys-279 (nucleophile) is an active-site residue. Positions 280, 283, 319, 321, and 322 each coordinate L-glutamine. Catalysis depends on residues His-361 and Glu-363.

This sequence belongs to the CarA family. Composed of two chains; the small (or glutamine) chain promotes the hydrolysis of glutamine to ammonia, which is used by the large (or ammonia) chain to synthesize carbamoyl phosphate. Tetramer of heterodimers (alpha,beta)4.

It carries out the reaction hydrogencarbonate + L-glutamine + 2 ATP + H2O = carbamoyl phosphate + L-glutamate + 2 ADP + phosphate + 2 H(+). The enzyme catalyses L-glutamine + H2O = L-glutamate + NH4(+). The protein operates within amino-acid biosynthesis; L-arginine biosynthesis; carbamoyl phosphate from bicarbonate: step 1/1. It participates in pyrimidine metabolism; UMP biosynthesis via de novo pathway; (S)-dihydroorotate from bicarbonate: step 1/3. Its function is as follows. Small subunit of the glutamine-dependent carbamoyl phosphate synthetase (CPSase). CPSase catalyzes the formation of carbamoyl phosphate from the ammonia moiety of glutamine, carbonate, and phosphate donated by ATP, constituting the first step of 2 biosynthetic pathways, one leading to arginine and/or urea and the other to pyrimidine nucleotides. The small subunit (glutamine amidotransferase) binds and cleaves glutamine to supply the large subunit with the substrate ammonia. The chain is Carbamoyl phosphate synthase small chain from Synechococcus sp. (strain ATCC 27144 / PCC 6301 / SAUG 1402/1) (Anacystis nidulans).